The following is a 1235-amino-acid chain: Serine/threonine-protein kinase TAO2 (1235 aa).

Ser9 is modified (phosphoserine). Residues 28-281 (FSDLREIGHG…SEVLLKHRFV (254 aa)) enclose the Protein kinase domain. ATP contacts are provided by residues 34–42 (IGHGSFGAV) and Lys57. Residue Asp151 is the Proton acceptor of the active site. Phosphoserine is present on Ser181. The tract at residues 318-457 (QEAPNGPGAE…TSTTSSARRR (140 aa)) is disordered. The segment covering 350–374 (SSHSVPSMSISASSQSSSVNSLADA) has biased composition (low complexity). Residues 375-393 (SDNEEEEEEEEEEEEEEEG) show a composition bias toward acidic residues. Positions 394-409 (PEAREMAMMQEGEHTV) are enriched in basic and acidic residues. Ser414 is subject to Phosphoserine. Coiled-coil stretches lie at residues 486–547 (SALR…RRHQ) and 574–601 (KELAALLEAQKRTYKLRKEQLKEELQEN). The residue at position 656 (Ser656) is a Phosphoserine. Residues 681–713 (LRQHEATRELELRQLQAVQRTRAELTRLQHQTE) are a coiled coil. 3 disordered regions span residues 732 to 777 (HAAQ…QPCS), 804 to 835 (KEGATLEPKQQRILGEESGAPSPSPQKHGSLV), and 891 to 939 (QGPA…RPCP). Residues 766–777 (NTGTPIEQQPCS) show a composition bias toward polar residues. Residues Ser777, Ser825, and Ser827 each carry the phosphoserine modification. A compositionally biased stretch (acidic residues) spans 899–908 (PEEEEEEEEG). The span at 924 to 934 (PDIPPEPPPTH) shows a compositional bias: pro residues. 2 helical membrane passes run 965-985 (LLPLLLLLLLPLLAAQGGGGL) and 987-1007 (AALLALEVGLVGLGASYLLLC). 2 positions are modified to phosphoserine: His1011 and Gly1031. 3 helical membrane passes run 1012-1032 (LPSSLFLLLAQGTALGAVLGL), 1043-1063 (LGLGAAWLLAWPGLALPLVAM), and 1166-1186 (QGLASHLPPWAIHTLASWGLL). The disordered stretch occupies residues 1198 to 1235 (LPRSQRQLGPPASRQPLPGTLAGRRSRTRQSRALPPWR).

The protein belongs to the protein kinase superfamily. STE Ser/Thr protein kinase family. STE20 subfamily. Interacts with MAP2K3 and MAP2K6. Self-associates. Interacts with tubulins through the C-terminal domain. Interacts with MAP3K7 and interferes with MAP3K7-binding to CHUK and thus prevents NF-kappa-B activation. Isoform 2 interacts with PCDH8; this complex may also include CDH2. Mg(2+) serves as cofactor. In terms of processing, isoforms 1 and 2 are autophosphorylated. C-terminal cleavage of isoform 1 and subsequent nuclear localization requires CASP9 activity. Post-translationally, autophosphorylated. Phosphorylated by ATM. In terms of processing, phosphorylated on Ser-1031 by MAPK14. This phosphorylation is required PCDH8 for endocytosis. Ubiquitously expressed, with a higher level of expression in testis and brain.

Its subcellular location is the cytoplasmic vesicle membrane. The protein resides in the cytoplasm. It is found in the cytoskeleton. The protein localises to the nucleus. It localises to the cell projection. Its subcellular location is the dendrite. The catalysed reaction is L-seryl-[protein] + ATP = O-phospho-L-seryl-[protein] + ADP + H(+). The enzyme catalyses L-threonyl-[protein] + ATP = O-phospho-L-threonyl-[protein] + ADP + H(+). Its activity is regulated as follows. Selectively inhibited by the enantiopure organoruthenium inhibitor 9E1. Activated following arsenic trioxide (As(2)O(3)) treatment. Serine/threonine-protein kinase involved in different processes such as membrane blebbing and apoptotic bodies formation DNA damage response and MAPK14/p38 MAPK stress-activated MAPK cascade. Phosphorylates itself, MBP, activated MAPK8, MAP2K3, MAP2K6 and tubulins. Activates the MAPK14/p38 MAPK signaling pathway through the specific activation and phosphorylation of the upstream MAP2K3 and MAP2K6 kinases. In response to DNA damage, involved in the G2/M transition DNA damage checkpoint by activating the p38/MAPK14 stress-activated MAPK cascade, probably by mediating phosphorylation of upstream MAP2K3 and MAP2K6 kinases. Isoform 1, but not isoform 2, plays a role in apoptotic morphological changes, including cell contraction, membrane blebbing and apoptotic bodies formation. This function, which requires the activation of MAPK8/JNK and nuclear localization of C-terminally truncated isoform 1, may be linked to the mitochondrial CASP9-associated death pathway. Isoform 1 binds to microtubules and affects their organization and stability independently of its kinase activity. Prevents MAP3K7-mediated activation of CHUK, and thus NF-kappa-B activation, but not that of MAPK8/JNK. May play a role in the osmotic stress-MAPK8 pathway. Isoform 2, but not isoform 1, is required for PCDH8 endocytosis. Following homophilic interactions between PCDH8 extracellular domains, isoform 2 phosphorylates and activates MAPK14/p38 MAPK which in turn phosphorylates isoform 2. This process leads to PCDH8 endocytosis and CDH2 cointernalization. Both isoforms are involved in MAPK14 phosphorylation. The sequence is that of Serine/threonine-protein kinase TAO2 (TAOK2) from Homo sapiens (Human).